A 1693-amino-acid chain; its full sequence is Latrophilin Cirl (1693 aa).

Residues 1-753 lie on the Extracellular side of the membrane; the sequence is MLPTILSISY…LFTMFDGNMR (753 aa). The region spanning 25-114 is the SUEL-type lectin domain; the sequence is ACEGKKLTIE…KYLEAHYQCI (90 aa). Residue Asn-142 is glycosylated (N-linked (GlcNAc...) asparagine). Polar residues-rich tracts occupy residues 185–198 and 256–265; these read TAVTHSTPWSSTTA and NVTSPSNTRI. The disordered stretch occupies residues 185–299; that stretch reads TAVTHSTPWS…PGTAASGSVA (115 aa). N-linked (GlcNAc...) asparagine glycosylation occurs at Asn-256. The segment covering 275–299 has biased composition (low complexity); sequence DDGTLLTTKSSPNRPPGTAASGSVA. 6 N-linked (GlcNAc...) asparagine glycosylation sites follow: Asn-301, Asn-340, Asn-397, Asn-641, Asn-689, and Asn-716. A disordered region spans residues 375-399; sequence YDEYDDDASSTTPAPSGGDCLHNSS. The region spanning 564-740 is the GAIN-B domain; the sequence is KKSKIYSSVV…AILMDVVDEH (177 aa). Intrachain disulfides connect Cys-695–Cys-722 and Cys-710–Cys-724. The segment at 695–740 is GPS; sequence CVFWNYIDHAWSANGCSLESTNRTHSVCSCNHLTNFAILMDVVDEH. A helical transmembrane segment spans residues 754 to 774; it reads IFIYISIGICVVFIVIALLTL. The Cytoplasmic segment spans residues 775-787; it reads KLFNGVFVKSART. A helical membrane pass occupies residues 788 to 808; it reads SIYTSIYLCLLAIELLFLLGI. Residues 809–814 lie on the Extracellular side of the membrane; sequence EQTETS. A helical transmembrane segment spans residues 815 to 835; that stretch reads IFCGFITIFLHCAILSGTAWF. Residues 836 to 861 are Cytoplasmic-facing; it reads CYEAFHSYSTLTSDELLLEVDQTPKV. A helical membrane pass occupies residues 862-882; it reads NCYYLLSYGLSLSVVAISLVI. The Extracellular portion of the chain corresponds to 883–906; it reads DPSTYTQNDYCVLMEANALFYATF. Residues 907-927 form a helical membrane-spanning segment; that stretch reads VVPVLVFFVAAIGYTFLSWII. Residues 928–954 lie on the Cytoplasmic side of the membrane; that stretch reads MCRKSRTGLKTKEHTRLASVRFDIRCS. Residues 955–975 traverse the membrane as a helical segment; it reads FVFLLLLSAVWCSAYFYLRGA. The Extracellular portion of the chain corresponds to 976–985; sequence KMDDDTADVY. Residues 986–1006 traverse the membrane as a helical segment; sequence GYCFICFNTLLGLYIFVFHCI. Residues 1007–1693 lie on the Cytoplasmic side of the membrane; sequence QNEKIRREYR…VRCYLEPLAK (687 aa). The residue at position 1142 (Ser-1142) is a Phosphoserine. Disordered regions lie at residues 1156–1194, 1220–1247, 1294–1319, 1433–1521, and 1601–1673; these read HKQQQQQQQQGPLGESYYHQPDYYSWKQPSTGTGGLKTP, KPNSGQHGKKKRGAGGVPASPSGSLHSR, QQQLRRQQLHQQQQQLSSDEEQAEQH, GGGS…SDER, and LAVN…QQRH. Phosphoserine occurs at positions 1239 and 1246. Residues 1294 to 1309 are compositionally biased toward low complexity; the sequence is QQQLRRQQLHQQQQQL. A phosphoserine mark is found at Ser-1310 and Ser-1311. The segment covering 1439–1464 has biased composition (low complexity); it reads GGSVSSRSQQQQLKKQQQQQSLAQQR. Composition is skewed to acidic residues over residues 1472–1486 and 1496–1507; these read DDDDDEDEEEDEEAT and CDEDEEEDESDL. Residues 1508–1521 show a composition bias toward basic and acidic residues; that stretch reads EHDAHGLPPQSDER. Low complexity predominate over residues 1630–1655; it reads LQKLSPQSTTSSSSHTSHSNPNLHPH. The span at 1656 to 1672 shows a compositional bias: basic residues; it reads QLTHPHPHQHPPHHQQR.

The protein belongs to the G-protein coupled receptor 2 family. LN-TM7 subfamily. As to quaternary structure, forms a heterodimer, consisting of a large extracellular region non-covalently linked to a seven-transmembrane moiety. In terms of processing, proteolytically cleaved into 2 subunits, an extracellular subunit and a seven-transmembrane subunit.

Its subcellular location is the cell membrane. The polypeptide is Latrophilin Cirl (Drosophila sechellia (Fruit fly)).